A 233-amino-acid chain; its full sequence is Large ribosomal subunit protein mL67 (233 aa).

The interval 214-233 (RQQAQQSEQQSQSELESQTA) is disordered. Low complexity predominate over residues 215–233 (QQAQQSEQQSQSELESQTA).

This sequence belongs to the mitochondrion-specific ribosomal protein mL67 family.

The protein localises to the nucleus. The protein resides in the mitochondrion. Functionally, transcription factor involved in regulation of RNA polymerase II-dependent transcription. Also involved in regulation of mitochondrial DNA recombination, maintenance and repair, and generation of homoplasmic cells. The protein is Large ribosomal subunit protein mL67 (MHR1) of Debaryomyces hansenii (strain ATCC 36239 / CBS 767 / BCRC 21394 / JCM 1990 / NBRC 0083 / IGC 2968) (Yeast).